We begin with the raw amino-acid sequence, 666 residues long: Protein OS-9 (666 aa).

The N-terminal stretch at 1-30 (MAAEALLSSLLGLLFLGLLLPAHLTGGVGS) is a signal peptide. The 123-residue stretch at 108–230 (APCLLKTKDW…SIRTSRLCPH (123 aa)) folds into the MRH domain. A disulfide bond links C110 and C123. A mannooligosaccharide derivative contacts are provided by W117, W118, and Q130. Residue N177 is glycosylated (N-linked (GlcNAc...) asparagine). Intrachain disulfides connect C181–C216 and C196–C228. A mannooligosaccharide derivative contacts are provided by D182, R188, E212, and Y218. Disordered stretches follow at residues 261–356 (RQAE…NVQV), 370–449 (EELK…SDRE), 505–540 (ESQS…EHRV), and 631–666 (EANK…EFDF). 2 stretches are compositionally biased toward basic and acidic residues: residues 263–281 (AESK…DTDH) and 294–310 (PKKE…ESEF). Residues 320–332 (QATGTEEAQAGEQ) are compositionally biased toward low complexity. 2 stretches are compositionally biased toward basic and acidic residues: residues 370–379 (EELKGAEKGK) and 395–412 (PQRE…RGLV). Residues 413–429 (EEEDGDEEEEDEDEDEQ) are compositionally biased toward acidic residues. The segment covering 434 to 449 (EFEKELEGMLLPSDRE) has biased composition (basic and acidic residues). The span at 631–646 (EANKERQRQSELESNY) shows a compositional bias: basic and acidic residues. Over residues 657–666 (DTGDLDEFDF) the composition is skewed to acidic residues.

This sequence belongs to the OS-9 family. Component of the HRD1 complex, which comprises at least SYNV1/HRD1, DERL1/2, FAM8A1, HERPUD1/HERP, OS9, SEL1L and UBE2J1. FAM8A1 is stabilized by interaction with SYNV1, which prevents its proteasomal degradation. OS9 and UBE2J1 recruitment to the complex may be mediated by SEL1L. Through this complex, may interact with ERLEC1 and HSPA5. Interacts (via C-terminus) with CPNE6 (via second C2 domain); this interaction occurs in a calcium-dependent manner in vitro. Interacts with CREB3. Intramolecular disulfide bonds.

It localises to the endoplasmic reticulum lumen. In terms of biological role, lectin component of the HRD1 complex, which functions in endoplasmic reticulum (ER) quality control and ER-associated degradation (ERAD). Specifically recognizes and binds improperly folded glycoproteins as well as hyperglycosylated proteins, retain them in the ER, and transfers them to the ubiquitination machinery and promote their degradation. Possible targets include TRPV4 as well as hyperglycosylated HSP90B1. The sequence is that of Protein OS-9 (Os9) from Rattus norvegicus (Rat).